Here is a 309-residue protein sequence, read N- to C-terminus: Type II methyltransferase M.HgiDI (309 aa).

An SAM-dependent MTase C5-type domain is found at 1–297; that stretch reads MKTIDLFAGC…TSLQAYLNQP (297 aa). Cys75 is an active-site residue.

This sequence belongs to the class I-like SAM-binding methyltransferase superfamily. C5-methyltransferase family.

The catalysed reaction is a 2'-deoxycytidine in DNA + S-adenosyl-L-methionine = a 5-methyl-2'-deoxycytidine in DNA + S-adenosyl-L-homocysteine + H(+). A methylase that recognizes the double-stranded sequence 5'-GRCGYC-3', methylates C-? on both strands, and protects the DNA from cleavage by the HgiDI endonuclease. This Herpetosiphon aurantiacus (Herpetosiphon giganteus) protein is Type II methyltransferase M.HgiDI.